A 151-amino-acid chain; its full sequence is Cysteine proteinase inhibitor 10 (151 aa).

The signal sequence occupies residues 1 to 22 (MATSPMLFLVSLLLVLVAAATG). The region spanning 40 to 109 (GGRTEIRDVG…GVAYYLKVAA (70 aa)) is the Cystatin domain. The short motif at 96–100 (QVVSG) is the Secondary area of contact element.

Belongs to the cystatin family. Phytocystatin subfamily.

It localises to the secreted. Specific inhibitor of cysteine proteinases. Probably involved in the regulation of endogenous processes and in defense against pests and pathogens. This chain is Cysteine proteinase inhibitor 10, found in Oryza sativa subsp. indica (Rice).